The sequence spans 217 residues: Ras-related protein RABA1f (217 aa).

20 to 27 lines the GTP pocket; that stretch reads GDSGVGKS. The Effector region motif lies at 42-50; that stretch reads SKSTIGVEF. Residues 68–72, 126–129, and 156–157 each bind GTP; these read DTAGQ, NKAD, and SA. Residues Cys-214 and Cys-215 are each lipidated (S-geranylgeranyl cysteine).

This sequence belongs to the small GTPase superfamily. Rab family.

It localises to the cell membrane. Its function is as follows. Intracellular vesicle trafficking and protein transport. This Arabidopsis thaliana (Mouse-ear cress) protein is Ras-related protein RABA1f (RABA1F).